Consider the following 1374-residue polypeptide: Mitogen-activated protein kinase kinase kinase 5 (1374 aa).

Positions 68–87 are disordered; the sequence is PAATSSSSATRGRGSSVGGG. Residues 69 to 81 are compositionally biased toward low complexity; it reads AATSSSSATRGRG. Arg-78 and Arg-80 each carry asymmetric dimethylarginine; by PRMT1. A Phosphoserine; by PIM1 and PKB/AKT1 modification is found at Ser-83. Residues 649–1374 form an interaction with PPIA/CYPA region; sequence MVNTITEEKG…AIIDFRNKQT (726 aa). Residues 680–938 form the Protein kinase domain; it reads NGDRVVLGKG…ANDLLVDEFL (259 aa). Residues 686-694 and Lys-709 each bind ATP; that span reads LGKGTYGIV. Tyr-718 is modified (phosphotyrosine). The active-site Proton acceptor is the Asp-803. Thr-813 carries the post-translational modification Phosphothreonine; by autocatalysis. Thr-838 is modified (phosphothreonine; by autocatalysis, MELK and MAP3K6). Thr-842 is modified (phosphothreonine; by autocatalysis). Residue Ser-958 is modified to Phosphoserine. Ser-966 is subject to Phosphoserine; by autocatalysis. 2 positions are modified to phosphoserine: Ser-1029 and Ser-1033. Positions 1182–1209 are disordered; it reads SESDTADQEDLDVEDDHEEQPSNQTVRR. The span at 1185 to 1199 shows a compositional bias: acidic residues; it reads DTADQEDLDVEDDHE. Positions 1245 to 1285 form a coiled coil; sequence LGRMKIETNRLLEELVRKEKELQALLHRAIEEKDQEIKHLK.

The protein belongs to the protein kinase superfamily. STE Ser/Thr protein kinase family. MAP kinase kinase kinase subfamily. As to quaternary structure, homodimer when inactive. Binds both upstream activators and downstream substrates in multimolecular complexes. Part of a cytoplasmic complex made of HIPK1, DAB2IP and MAP3K5 in response to TNF. This complex formation promotes MAP3K5-JNK activation and subsequent apoptosis. Interacts with SOCS1 which recognizes phosphorylation of Tyr-718 and induces MAP3K5/ASK1 degradation in endothelial cells. Interacts with the 14-3-3 family proteins such as YWHAB, YWHAE, YWHAQ, YWHAH, YWHAZ and SFN. Interacts with ARRB2, BIRC2, DAB2IP, IGF1R, MAP3K6/ASK2, PGAM5, PIM1, PPP5C, SOCS1, STUB1, TRAF2, TRAF6 and TXN. Interacts with ERN1 in a TRAF2-dependent manner. Interacts with calcineurin subunit PPP3R1. Interacts with PPM1L. Interacts (via N-terminus) with RAF1 and this interaction inhibits the proapoptotic function of MAP3K5. Interacts with DAB2IP (via N-terminus C2 domain); the interaction occurs in a TNF-alpha-dependent manner. Interacts with DUSP13A; may positively regulate apoptosis. Interacts with DAXX. Interacts with RC3H2. Interacts with PPIA/CYPA. Interacts with PRMT1; the interaction results in MAP3K5 methylation by PRMT1 which inhibits MAP3K5 activation. Interacts with TRAF2; the interaction is inhibited by PRMT1. Interacts with TRIM48. In terms of assembly, (Microbial infection) Interacts with HIV-1 Nef; this interaction inhibits MAP3K5 signaling. Mg(2+) is required as a cofactor. In terms of processing, phosphorylated at Thr-838 through autophosphorylation and by MAP3K6/ASK2 which leads to activation. Thr-838 is dephosphorylated by PPP5C. Ser-83 and Ser-1033 are inactivating phosphorylation sites, the former of which is phosphorylated by AKT1. Phosphorylated at Ser-966 which induces association of MAP3K5/ASK1 with the 14-3-3 family proteins and suppresses MAP3K5/ASK1 activity. Calcineurin (CN) dephosphorylates this site. Also dephosphorylated and activated by PGAM5. Phosphorylation at Ser-966 in response to oxidative stress is negatively regulated by PPIA/CYPA. Ubiquitinated. Tumor necrosis factor (TNF) induces TNFR2-dependent ubiquitination, leading to proteasomal degradation. Ubiquitinated by RC3H2 in a TRIM48-dependent manner. Post-translationally, methylation at Arg-78 and Arg-80 by PRMT1 promotes association of MAP3K5 with thioredoxin and negatively regulates MAP3K5 association with TRAF2, inhibiting MAP3K5 activation. Methylation is blocked by ubiquitination of PRMT1 by TRIM48. Abundantly expressed in heart and pancreas.

The protein resides in the cytoplasm. It localises to the endoplasmic reticulum. It catalyses the reaction L-seryl-[protein] + ATP = O-phospho-L-seryl-[protein] + ADP + H(+). The enzyme catalyses L-threonyl-[protein] + ATP = O-phospho-L-threonyl-[protein] + ADP + H(+). Activated by various stressors, including oxidative stress, endoplasmic reticulum stress, and calcium overload, as well as by receptor-mediated inflammatory signals, such as the tumor necrosis factor (TNF) and lipopolysaccharide (LPS). Homophilic association of MAP3K5/ASK1 through the C-terminal coiled-coil domains and the heteromeric complex formation of MAP3K5/ASK1 with the reduced form of thioredoxin (TXN), constitutes an inactive form of the kinase. Upon ROS-induced dissociation of TXN from MAP3K5/ASK1, TRAF2 and TRAF6 are reciprocally recruited to MAP3K5/ASK1 and form the active MAP3K5/ASK1 signalosome, in which TRAF2 and TRAF6 appear to facilitate the active configuration of MAP3K5/ASK1. MAP3K5/ASK1 activity is also regulated through several phosphorylation and dephosphorylation events. Thr-838 is an activating phosphorylation site that is autophosphorylated and phosphorylated by MAP3K6/ASK2 and dephosphorylated by PPP5C. Ser-83 and Ser-1033 are inactivating phosphorylation sites, the former of which is phosphorylated by AKT1. Phosphorylation of Ser-966 induces association of MAP3K5/ASK1 with the 14-3-3 family proteins, which suppresses MAP3K5/ASK1 activity. Calcium/calmodulin-activated protein phosphatase calcineurin (PPP3CA) has been shown to directly dephosphorylate this site. SOCS1 binds to ASK1 by recognizing phosphorylation of Tyr-718 and induces MAP3K5/ASK1 degradation in endothelial cells. Also dephosphorylated and activated by PGAM5. Contains an N-terminal autoinhibitory domain. Once activated targeted for proteasomal degradation by RC3H2-mediated ubiquitination. Its function is as follows. Serine/threonine kinase which acts as an essential component of the MAP kinase signal transduction pathway. Plays an important role in the cascades of cellular responses evoked by changes in the environment. Mediates signaling for determination of cell fate such as differentiation and survival. Plays a crucial role in the apoptosis signal transduction pathway through mitochondria-dependent caspase activation. MAP3K5/ASK1 is required for the innate immune response, which is essential for host defense against a wide range of pathogens. Mediates signal transduction of various stressors like oxidative stress as well as by receptor-mediated inflammatory signals, such as the tumor necrosis factor (TNF) or lipopolysaccharide (LPS). Once activated, acts as an upstream activator of the MKK/JNK signal transduction cascade and the p38 MAPK signal transduction cascade through the phosphorylation and activation of several MAP kinase kinases like MAP2K4/SEK1, MAP2K3/MKK3, MAP2K6/MKK6 and MAP2K7/MKK7. These MAP2Ks in turn activate p38 MAPKs and c-jun N-terminal kinases (JNKs). Both p38 MAPK and JNKs control the transcription factors activator protein-1 (AP-1). The polypeptide is Mitogen-activated protein kinase kinase kinase 5 (MAP3K5) (Homo sapiens (Human)).